The primary structure comprises 431 residues: Serine hydroxymethyltransferase 2 (431 aa).

Residues Leu-131 and 135–137 (GHL) each bind (6S)-5,6,7,8-tetrahydrofolate. Lys-240 carries the post-translational modification N6-(pyridoxal phosphate)lysine. Residue Glu-256 participates in (6S)-5,6,7,8-tetrahydrofolate binding.

The protein belongs to the SHMT family. In terms of assembly, homodimer. Pyridoxal 5'-phosphate is required as a cofactor.

The protein localises to the cytoplasm. The catalysed reaction is (6R)-5,10-methylene-5,6,7,8-tetrahydrofolate + glycine + H2O = (6S)-5,6,7,8-tetrahydrofolate + L-serine. The protein operates within one-carbon metabolism; tetrahydrofolate interconversion. It functions in the pathway amino-acid biosynthesis; glycine biosynthesis; glycine from L-serine: step 1/1. Catalyzes the reversible interconversion of serine and glycine with tetrahydrofolate (THF) serving as the one-carbon carrier. This reaction serves as the major source of one-carbon groups required for the biosynthesis of purines, thymidylate, methionine, and other important biomolecules. Also exhibits THF-independent aldolase activity toward beta-hydroxyamino acids, producing glycine and aldehydes, via a retro-aldol mechanism. This Vibrio vulnificus (strain YJ016) protein is Serine hydroxymethyltransferase 2.